Consider the following 113-residue polypeptide: Hydrogenase maturation factor HybF (113 aa).

Positions 2 and 3 each coordinate Ni(2+). C73, C76, C89, and C92 together coordinate Zn(2+).

Belongs to the HypA/HybF family. HybF subfamily.

Functionally, involved in the maturation of [NiFe] hydrogenases. Required for nickel insertion into the metal center of the hydrogenase. The chain is Hydrogenase maturation factor HybF from Morganella morganii (Proteus morganii).